The chain runs to 495 residues: UDP-glycosyltransferase 73E1 (495 aa).

UDP-alpha-D-glucose-binding positions include serine 299, 355–356 (WA), 373–381 (HCGWNSTIE), and 395–398 (FADQ).

The protein belongs to the UDP-glycosyltransferase family.

In terms of biological role, may glycosylate diterpenes or flavonols in leaves. The sequence is that of UDP-glycosyltransferase 73E1 from Stevia rebaudiana (Stevia).